Here is a 276-residue protein sequence, read N- to C-terminus: Sulfur carrier protein FdhD (276 aa).

Cys118 serves as the catalytic Cysteine persulfide intermediate.

It belongs to the FdhD family.

The protein localises to the cytoplasm. In terms of biological role, required for formate dehydrogenase (FDH) activity. Acts as a sulfur carrier protein that transfers sulfur from IscS to the molybdenum cofactor prior to its insertion into FDH. The polypeptide is Sulfur carrier protein FdhD (Mycobacterium bovis (strain ATCC BAA-935 / AF2122/97)).